Consider the following 267-residue polypeptide: Indole-3-glycerol phosphate synthase (267 aa).

It belongs to the TrpC family.

The catalysed reaction is 1-(2-carboxyphenylamino)-1-deoxy-D-ribulose 5-phosphate + H(+) = (1S,2R)-1-C-(indol-3-yl)glycerol 3-phosphate + CO2 + H2O. It participates in amino-acid biosynthesis; L-tryptophan biosynthesis; L-tryptophan from chorismate: step 4/5. This chain is Indole-3-glycerol phosphate synthase, found in Deinococcus radiodurans (strain ATCC 13939 / DSM 20539 / JCM 16871 / CCUG 27074 / LMG 4051 / NBRC 15346 / NCIMB 9279 / VKM B-1422 / R1).